We begin with the raw amino-acid sequence, 98 residues long: NADH-ubiquinone oxidoreductase chain 4L (98 aa).

Helical transmembrane passes span 1–21 (MTMVYANIFLAFIMSLMGLLM), 29–49 (SLLCLEGMMLSLFVMMTVTIL), and 61–81 (IILLVFAACEAALGLSLLVMV).

Belongs to the complex I subunit 4L family. In terms of assembly, core subunit of respiratory chain NADH dehydrogenase (Complex I) which is composed of 45 different subunits.

It is found in the mitochondrion inner membrane. It catalyses the reaction a ubiquinone + NADH + 5 H(+)(in) = a ubiquinol + NAD(+) + 4 H(+)(out). In terms of biological role, core subunit of the mitochondrial membrane respiratory chain NADH dehydrogenase (Complex I) which catalyzes electron transfer from NADH through the respiratory chain, using ubiquinone as an electron acceptor. Part of the enzyme membrane arm which is embedded in the lipid bilayer and involved in proton translocation. This chain is NADH-ubiquinone oxidoreductase chain 4L (MT-ND4L), found in Mirounga angustirostris (Northern elephant seal).